The sequence spans 476 residues: Aspartyl/glutamyl-tRNA(Asn/Gln) amidotransferase subunit B (476 aa).

It belongs to the GatB/GatE family. GatB subfamily. Heterotrimer of A, B and C subunits.

The catalysed reaction is L-glutamyl-tRNA(Gln) + L-glutamine + ATP + H2O = L-glutaminyl-tRNA(Gln) + L-glutamate + ADP + phosphate + H(+). It carries out the reaction L-aspartyl-tRNA(Asn) + L-glutamine + ATP + H2O = L-asparaginyl-tRNA(Asn) + L-glutamate + ADP + phosphate + 2 H(+). Its function is as follows. Allows the formation of correctly charged Asn-tRNA(Asn) or Gln-tRNA(Gln) through the transamidation of misacylated Asp-tRNA(Asn) or Glu-tRNA(Gln) in organisms which lack either or both of asparaginyl-tRNA or glutaminyl-tRNA synthetases. The reaction takes place in the presence of glutamine and ATP through an activated phospho-Asp-tRNA(Asn) or phospho-Glu-tRNA(Gln). The sequence is that of Aspartyl/glutamyl-tRNA(Asn/Gln) amidotransferase subunit B from Lacticaseibacillus casei (strain BL23) (Lactobacillus casei).